The chain runs to 452 residues: Enolase (452 aa).

Position 167 (Gln-167) interacts with (2R)-2-phosphoglycerate. Glu-209 acts as the Proton donor in catalysis. Asp-250, Glu-307, and Asp-334 together coordinate Mg(2+). (2R)-2-phosphoglycerate is bound by residues Lys-359, Arg-388, Ser-389, and Lys-410. Lys-359 functions as the Proton acceptor in the catalytic mechanism.

The protein belongs to the enolase family. It depends on Mg(2+) as a cofactor.

It localises to the cytoplasm. The protein resides in the secreted. The protein localises to the cell surface. The enzyme catalyses (2R)-2-phosphoglycerate = phosphoenolpyruvate + H2O. It participates in carbohydrate degradation; glycolysis; pyruvate from D-glyceraldehyde 3-phosphate: step 4/5. Catalyzes the reversible conversion of 2-phosphoglycerate (2-PG) into phosphoenolpyruvate (PEP). It is essential for the degradation of carbohydrates via glycolysis. The sequence is that of Enolase from Mesomycoplasma hyopneumoniae (strain 7448) (Mycoplasma hyopneumoniae).